The primary structure comprises 70 residues: Envelope small membrane protein (70 aa).

Residue G2 is the site of N-myristoyl glycine; by host attachment. Residues 2 to 15 form an endoplasmic reticulum retention signal region; that stretch reads GSLWSKISQLFVDA. Over 2–25 the chain is Virion surface; the sequence is GSLWSKISQLFVDAFTEFLVSVVD. A helical transmembrane segment spans residues 26–46; sequence IVIFLAILFGFTVAGWLLVFL. Residues 47 to 70 lie on the Intravirion side of the membrane; that stretch reads LRVVCSALLRSRSAIHSPELSKVL.

The protein belongs to the arteriviridae E protein family. As to quaternary structure, homooligomer. Associates with itself into higher-order structures, including dimers, trimers and tetramers. Associates with the GP2b-GP3-GP4 complex. Post-translationally, myristoylated. Not glycosylated.

Its subcellular location is the virion membrane. It is found in the host endoplasmic reticulum membrane. The protein localises to the host Golgi apparatus membrane. It localises to the secreted. Minor envelope protein. May function as a viroporin in the virion envelope that facilitates uncoating of the virus in order to release the genomic RNA into the cytoplasm for subsequent replication. This chain is Envelope small membrane protein (GP2b), found in Sus scrofa (Pig).